We begin with the raw amino-acid sequence, 177 residues long: Cell division protein ZapC (177 aa).

This sequence belongs to the ZapC family. Interacts directly with FtsZ.

The protein localises to the cytoplasm. Contributes to the efficiency of the cell division process by stabilizing the polymeric form of the cell division protein FtsZ. Acts by promoting interactions between FtsZ protofilaments and suppressing the GTPase activity of FtsZ. The chain is Cell division protein ZapC from Shewanella oneidensis (strain ATCC 700550 / JCM 31522 / CIP 106686 / LMG 19005 / NCIMB 14063 / MR-1).